The primary structure comprises 174 residues: ATP-dependent protease subunit HslV (174 aa).

The active site involves Thr2. Residues Gly157, Cys160, and Thr163 each coordinate Na(+).

This sequence belongs to the peptidase T1B family. HslV subfamily. In terms of assembly, a double ring-shaped homohexamer of HslV is capped on each side by a ring-shaped HslU homohexamer. The assembly of the HslU/HslV complex is dependent on binding of ATP.

The protein resides in the cytoplasm. It carries out the reaction ATP-dependent cleavage of peptide bonds with broad specificity.. With respect to regulation, allosterically activated by HslU binding. Its function is as follows. Protease subunit of a proteasome-like degradation complex believed to be a general protein degrading machinery. In Shewanella pealeana (strain ATCC 700345 / ANG-SQ1), this protein is ATP-dependent protease subunit HslV.